The following is a 151-amino-acid chain: Aspartate carbamoyltransferase regulatory chain (151 aa).

The Zn(2+) site is built by cysteine 107, cysteine 112, cysteine 135, and cysteine 138.

The protein belongs to the PyrI family. In terms of assembly, contains catalytic and regulatory chains. The cofactor is Zn(2+).

In terms of biological role, involved in allosteric regulation of aspartate carbamoyltransferase. The chain is Aspartate carbamoyltransferase regulatory chain from Psychromonas ingrahamii (strain DSM 17664 / CCUG 51855 / 37).